The following is a 363-amino-acid chain: Hydroxycarboxylic acid receptor 2 (363 aa).

Residues 1–33 are Extracellular-facing; that stretch reads MNRHHLQDHFLEIDKKNCCVFRDDFIVKVLPPV. The helical transmembrane segment at 34 to 54 threads the bilayer; that stretch reads LGLEFIFGLLGNGLALWIFCF. Over 55-63 the chain is Cytoplasmic; it reads HLKSWKSSR. Residues 64–84 traverse the membrane as a helical segment; that stretch reads IFLFNLAVADFLLIICLPFLM. Over 85-102 the chain is Extracellular; it reads DNYVRRWDWKFGDIPCRL. A disulfide bridge connects residues Cys-100 and Cys-177. The helical transmembrane segment at 103–123 threads the bilayer; sequence MLFMLAMNRQGSIIFLTVVAV. The Cytoplasmic segment spans residues 124 to 142; it reads DRYFRVVHPHHALNKISNR. The chain crosses the membrane as a helical span at residues 143-163; the sequence is TAAIISCLLWGITIGLTVHLL. Over 164 to 192 the chain is Extracellular; sequence KKKMPIQNGGANLCSSFSICHTFQWHEAM. A helical membrane pass occupies residues 193-213; the sequence is FLLEFFLPLGIILFCSARIIW. Topologically, residues 214–229 are cytoplasmic; it reads SLRQRQMDRHAKIKRA. A helical membrane pass occupies residues 230-250; that stretch reads ITFIMVVAIVFVICFLPSVVV. The Extracellular segment spans residues 251–273; sequence RIRIFWLLHTSGTQNCEVYRSVD. Residues 274–294 traverse the membrane as a helical segment; the sequence is LAFFITLSFTYMNSMLDPVVY. Residues 295–363 lie on the Cytoplasmic side of the membrane; the sequence is YFSSPSFPNF…SPSYLGPTSP (69 aa). Residues 319 to 363 form a disordered region; the sequence is GEPDNNRSTSVELTGDPNKTRGAPEALMANSGEPWSPSYLGPTSP. Ser-328 bears the Phosphoserine mark.

This sequence belongs to the G-protein coupled receptor 1 family. Expression largely restricted to adipose tissue and spleen. Expressed on mature neutrophils but not on immature neutrophils or eosinophils.

The protein resides in the cell membrane. Acts as a high affinity receptor for both nicotinic acid (also known as niacin) and (D)-beta-hydroxybutyrate and mediates increased adiponectin secretion and decreased lipolysis through G(i)-protein-mediated inhibition of adenylyl cyclase. This pharmacological effect requires nicotinic acid doses that are much higher than those provided by a normal diet. Mediates nicotinic acid-induced apoptosis in mature neutrophils. Receptor activation by nicotinic acid results in reduced cAMP levels which may affect activity of cAMP-dependent protein kinase A and phosphorylation of target proteins, leading to neutrophil apoptosis. The rank order of potency for the displacement of nicotinic acid binding is 5-methyl pyrazole-3-carboxylic acid = pyridine-3-acetic acid &gt; acifran &gt; 5-methyl nicotinic acid = acipimox &gt;&gt; nicotinuric acid = nicotinamide. The polypeptide is Hydroxycarboxylic acid receptor 2 (HCAR2) (Homo sapiens (Human)).